A 212-amino-acid polypeptide reads, in one-letter code: Thymidylate kinase (212 aa).

Residue 15-22 (GIDGAGKS) coordinates ATP.

This sequence belongs to the thymidylate kinase family.

It catalyses the reaction dTMP + ATP = dTDP + ADP. In terms of biological role, phosphorylation of dTMP to form dTDP in both de novo and salvage pathways of dTTP synthesis. This is Thymidylate kinase from Chromobacterium violaceum (strain ATCC 12472 / DSM 30191 / JCM 1249 / CCUG 213 / NBRC 12614 / NCIMB 9131 / NCTC 9757 / MK).